Reading from the N-terminus, the 439-residue chain is Nuclear hormone receptor family member nhr-97 (439 aa).

Positions 1–13 are enriched in polar residues; it reads MSGDAQPSSNQRA. Positions 1–22 are disordered; the sequence is MSGDAQPSSNQRATEARPPPSP. The nuclear receptor DNA-binding region spans 32 to 108; sequence GALCVVCGDR…VGMKIEAVKM (77 aa). 2 NR C4-type zinc fingers span residues 35-56 and 72-96; these read CVVCGDRACSHLYYGVAACHGC and CRYGGNCSISTAGRNACRYCRFHRC. The interval 112–135 is disordered; sequence LTKRKKEKTDEDDTDDGGSHESFE. The NR LBD domain maps to 173–408; sequence FVQPSLQNLL…GEGLLFWQLY (236 aa).

It belongs to the nuclear hormone receptor family.

The protein resides in the nucleus. Its function is as follows. Orphan nuclear receptor. The polypeptide is Nuclear hormone receptor family member nhr-97 (nhr-97) (Caenorhabditis elegans).